The following is a 131-amino-acid chain: Phosphoribosyl-AMP cyclohydrolase (131 aa).

Asp78 provides a ligand contact to Mg(2+). Position 79 (Cys79) interacts with Zn(2+). Residues Asp80 and Asp82 each coordinate Mg(2+). Residues Cys96 and Cys103 each contribute to the Zn(2+) site.

It belongs to the PRA-CH family. As to quaternary structure, homodimer. The cofactor is Mg(2+). Zn(2+) is required as a cofactor.

It localises to the cytoplasm. It carries out the reaction 1-(5-phospho-beta-D-ribosyl)-5'-AMP + H2O = 1-(5-phospho-beta-D-ribosyl)-5-[(5-phospho-beta-D-ribosylamino)methylideneamino]imidazole-4-carboxamide. It participates in amino-acid biosynthesis; L-histidine biosynthesis; L-histidine from 5-phospho-alpha-D-ribose 1-diphosphate: step 3/9. Its function is as follows. Catalyzes the hydrolysis of the adenine ring of phosphoribosyl-AMP. The chain is Phosphoribosyl-AMP cyclohydrolase from Neisseria meningitidis serogroup C / serotype 2a (strain ATCC 700532 / DSM 15464 / FAM18).